The primary structure comprises 294 residues: uncharacterized protein (294 aa).

This is an uncharacterized protein from Diadromus pulchellus idnoreovirus 1 (DpIRV-1).